Consider the following 71-residue polypeptide: Antimicrobial peptide VpCT4 (71 aa).

An N-terminal signal peptide occupies residues 1 to 23 (MKTQFVILIVAIVILQLISQSEA). Leu39 bears the Leucine amide mark. A propeptide spanning residues 40–71 (GKRGVQNMDQFDDIFEPELSEADLRYLQDLLR) is cleaved from the precursor.

The protein belongs to the non-disulfide-bridged peptide (NDBP) superfamily. Short antimicrobial peptide (group 4) family. In terms of tissue distribution, expressed by the venom gland.

The protein localises to the secreted. It is found in the target cell membrane. In terms of biological role, antimicrobial peptide with potent activity against bacteria S.aureus (MIC=9.3 uM), weak activity against E.coli (MIC&gt;100 uM), and weak activity against pathogenic yeasts C.albicans (MIC=100 uM) and C.glabrata (MIC=100 uM). Is not very effective against P.aeruginosa (MIC&gt;300 uM). Also provokes high hemolysis on human erythrocytes (HC(50)=4.8 uM). This Mesomexovis punctatus (Scorpion) protein is Antimicrobial peptide VpCT4.